The following is a 180-amino-acid chain: Nucleoside triphosphate/diphosphate phosphatase (180 aa).

Arg-26 functions as the Proton donor in the catalytic mechanism. Mg(2+) is bound by residues Asn-90, Asp-106, Asp-108, Asp-110, Asp-123, and Glu-126.

This sequence belongs to the Ntdp family. Mg(2+) serves as cofactor.

The catalysed reaction is a ribonucleoside 5'-triphosphate + H2O = a ribonucleoside 5'-diphosphate + phosphate + H(+). It catalyses the reaction a ribonucleoside 5'-diphosphate + H2O = a ribonucleoside 5'-phosphate + phosphate + H(+). Has nucleoside phosphatase activity towards nucleoside triphosphates and nucleoside diphosphates. The polypeptide is Nucleoside triphosphate/diphosphate phosphatase (Staphylococcus haemolyticus (strain JCSC1435)).